Here is a 935-residue protein sequence, read N- to C-terminus: Protocadherin gamma-A11 (935 aa).

An N-terminal signal peptide occupies residues 1–29 (MANRLQRGDRSRLLLLLCIFLGTLRGFRA). 6 consecutive Cadherin domains span residues 30–134 (RQIR…APSF), 135–243 (QEDE…IPMF), 244–348 (TQSV…APEI), 349–453 (TITS…PPVF), 454–563 (PHSS…APEI), and 571–677 (DGST…ADLG). The Extracellular portion of the chain corresponds to 30-693 (RQIRYSVPEE…NSEASDLSLY (664 aa)). N-linked (GlcNAc...) asparagine glycosylation occurs at Asn-48. Asn-255, Asn-266, Asn-420, and Asn-546 each carry an N-linked (GlcNAc...) asparagine glycan. The helical transmembrane segment at 694–714 (LVVAVAAVSCIFLVFVIVLLA) threads the bilayer. The Cytoplasmic portion of the chain corresponds to 715 to 935 (LRLWRWHKSR…KKKSGKKEKK (221 aa)). Disordered regions lie at residues 805 to 844 (CDPT…WPNN) and 905 to 935 (ATLT…KEKK). Over residues 807-844 (PTSNQQAPPNTDWRFSQAQRPGTSGSQNGDDTGTWPNN) the composition is skewed to polar residues. The segment covering 925 to 935 (NKKKSGKKEKK) has biased composition (basic residues).

The protein resides in the cell membrane. In terms of biological role, potential calcium-dependent cell-adhesion protein. May be involved in the establishment and maintenance of specific neuronal connections in the brain. The protein is Protocadherin gamma-A11 (PCDHGA11) of Pan troglodytes (Chimpanzee).